We begin with the raw amino-acid sequence, 370 residues long: A-type ATP synthase subunit C (370 aa).

The protein belongs to the V-ATPase V0D/AC39 subunit family. In terms of assembly, has multiple subunits with at least A(3), B(3), C, D, E, F, H, I and proteolipid K(x).

It localises to the cell membrane. Its function is as follows. Component of the A-type ATP synthase that produces ATP from ADP in the presence of a proton gradient across the membrane. The protein is A-type ATP synthase subunit C of Pyrococcus horikoshii (strain ATCC 700860 / DSM 12428 / JCM 9974 / NBRC 100139 / OT-3).